Reading from the N-terminus, the 731-residue chain is Endopolyphosphatase (731 aa).

The Cytoplasmic segment spans residues 1–4 (MSLS). A helical; Signal-anchor for type II membrane protein membrane pass occupies residues 5–25 (RCILGLACLWHGVIASPLGAV). Over 26-731 (PSNIPIATDL…VEKEDLKKFT (706 aa)) the chain is Vacuolar. Asn106 is a glycosylation site (N-linked (GlcNAc...) asparagine). A disordered region spans residues 375-403 (KLQPPPTDSKNSGQLKKGKKGRKGKKKKP). Residues 390 to 402 (KKGKKGRKGKKKK) are compositionally biased toward basic residues. Residue Asn433 is glycosylated (N-linked (GlcNAc...) asparagine). The interval 456 to 522 (EQNDRQKHLD…PPGPAYSPQP (67 aa)) is disordered. 2 stretches are compositionally biased toward basic and acidic residues: residues 457–474 (QNDRQKHLDLKRQHPSHM) and 492–501 (GGDSKPKKPD). Positions 505–519 (PHPPAKSSPPGPAYS) are enriched in pro residues. N-linked (GlcNAc...) asparagine glycans are attached at residues Asn534 and Asn540. Residues 626-706 (AKSIDVSYES…HKKKKGKKRQ (81 aa)) form a disordered region. Acidic residues predominate over residues 636–686 (AAEEEEEEEEEEEEDLFEEVEETDEEEEQEDDDLSDGEEVDDDSDEDELET). Positions 691-706 (KHDKKKHKKKKGKKRQ) are enriched in basic residues.

The protein belongs to the endopolyphosphatase PPN1 family. It depends on a divalent metal cation as a cofactor. In terms of processing, processing by proteases in the vacuole may be required for activation.

It localises to the vacuole membrane. The enzyme catalyses [phosphate](n+1) + n H2O = (n+1) phosphate + n H(+). Catalyzes the hydrolysis of inorganic polyphosphate (polyP) chains of many hundreds of phosphate residues into shorter lengths. This is Endopolyphosphatase (epp-1) from Neurospora crassa (strain ATCC 24698 / 74-OR23-1A / CBS 708.71 / DSM 1257 / FGSC 987).